Consider the following 371-residue polypeptide: 4-hydroxy-3-methylbut-2-en-1-yl diphosphate synthase (flavodoxin) (371 aa).

[4Fe-4S] cluster-binding residues include C270, C273, C305, and E312.

The protein belongs to the IspG family. It depends on [4Fe-4S] cluster as a cofactor.

The catalysed reaction is (2E)-4-hydroxy-3-methylbut-2-enyl diphosphate + oxidized [flavodoxin] + H2O + 2 H(+) = 2-C-methyl-D-erythritol 2,4-cyclic diphosphate + reduced [flavodoxin]. The protein operates within isoprenoid biosynthesis; isopentenyl diphosphate biosynthesis via DXP pathway; isopentenyl diphosphate from 1-deoxy-D-xylulose 5-phosphate: step 5/6. Converts 2C-methyl-D-erythritol 2,4-cyclodiphosphate (ME-2,4cPP) into 1-hydroxy-2-methyl-2-(E)-butenyl 4-diphosphate. The sequence is that of 4-hydroxy-3-methylbut-2-en-1-yl diphosphate synthase (flavodoxin) from Shewanella sp. (strain W3-18-1).